A 114-amino-acid chain; its full sequence is Macrophage migration inhibitory factor homolog (114 aa).

Catalysis depends on Pro2, which acts as the Proton acceptor; via imino nitrogen. Substrate contacts are provided by Lys33 and Asn98.

This sequence belongs to the MIF family.

The protein resides in the secreted. The enzyme catalyses L-dopachrome = 5,6-dihydroxyindole-2-carboxylate. The catalysed reaction is 3-phenylpyruvate = enol-phenylpyruvate. Its function is as follows. Tautomerization of the methyl ester of L-dopachrome. Inhibits migration of human peripheral blood mononuclear cells. This is Macrophage migration inhibitory factor homolog from Trichuris trichiura (Whipworm).